The chain runs to 669 residues: DNA ligase (669 aa).

NAD(+)-binding positions include 33 to 37 (DAEYD), 82 to 83 (SL), and glutamate 114. Residue lysine 116 is the N6-AMP-lysine intermediate of the active site. 4 residues coordinate NAD(+): arginine 137, glutamate 174, lysine 291, and lysine 315. Zn(2+) contacts are provided by cysteine 409, cysteine 412, cysteine 427, and cysteine 433. A BRCT domain is found at 593–669 (EIPQPLAGKV…QTEQDLLALL (77 aa)).

This sequence belongs to the NAD-dependent DNA ligase family. LigA subfamily. Requires Mg(2+) as cofactor. Mn(2+) is required as a cofactor.

The enzyme catalyses NAD(+) + (deoxyribonucleotide)n-3'-hydroxyl + 5'-phospho-(deoxyribonucleotide)m = (deoxyribonucleotide)n+m + AMP + beta-nicotinamide D-nucleotide.. DNA ligase that catalyzes the formation of phosphodiester linkages between 5'-phosphoryl and 3'-hydroxyl groups in double-stranded DNA using NAD as a coenzyme and as the energy source for the reaction. It is essential for DNA replication and repair of damaged DNA. This Vibrio vulnificus (strain CMCP6) protein is DNA ligase.